The sequence spans 180 residues: Regulator of G-protein signaling 8 (180 aa).

The residue at position 26 (Ser26) is a Phosphoserine. Positions 56–171 constitute an RGS domain; sequence SFDVLLSHKY…FLRSKMYLDL (116 aa).

As to quaternary structure, interacts with GNAO1 and GNAI3. As to expression, expressed at high levels in brain. Very little expression detected in other tissues. Detected in Purkinje cells in the cerebellum.

It localises to the cell membrane. The protein localises to the membrane. Its subcellular location is the perikaryon. It is found in the cell projection. The protein resides in the dendrite. It localises to the nucleus. Its function is as follows. Regulates G protein-coupled receptor signaling cascades, including signaling via muscarinic acetylcholine receptor CHRM2 and dopamine receptor DRD2. Inhibits signal transduction by increasing the GTPase activity of G protein alpha subunits, thereby driving them into their inactive GDP-bound form. Modulates the activity of potassium channels that are activated in response to DRD2 and CHRM2 signaling. This chain is Regulator of G-protein signaling 8 (Rgs8), found in Rattus norvegicus (Rat).